The primary structure comprises 321 residues: Sideroflexin-3 (321 aa).

Met1 carries the post-translational modification N-acetylmethionine. The next 4 helical transmembrane spans lie at 146 to 164 (LGTA…ALGL), 174 to 194 (LVGR…NIPL), 225 to 245 (IFQV…IPPV), and 266 to 286 (LQVG…CALF).

It belongs to the sideroflexin family.

It is found in the mitochondrion membrane. It catalyses the reaction L-serine(in) = L-serine(out). Functionally, mitochondrial serine transporter that mediates transport of serine into mitochondria, an important step of the one-carbon metabolism pathway. Mitochondrial serine is converted to glycine and formate, which then exits to the cytosol where it is used to generate the charged folates that serve as one-carbon donors. The polypeptide is Sideroflexin-3 (Sfxn3) (Rattus norvegicus (Rat)).